The following is a 505-amino-acid chain: Sodium/sialic acid symporter NanT (505 aa).

Transmembrane regions (helical) follow at residues 9–29 (LNYI…VYFA), 45–65 (IPGW…ITFM), 80–100 (IGQY…IPFF), 128–148 (FMLF…LALM), and 155–175 (PLMI…LGGI). Ala-56 is a binding site for Na(+). Residue Thr-58 participates in N-acetyl-alpha-neuraminate binding. Leu-59 provides a ligand contact to Na(+). Residues Ser-60, Thr-63, Gln-82, and Arg-135 each coordinate N-acetyl-alpha-neuraminate. Asp-182 is a binding site for Na(+). Helical transmembrane passes span 183-203 (VIQG…ICFN), 227-247 (FSWS…FFAS), 280-300 (LVAC…AYYT), and 318-338 (FYVI…AIFA). Residues Ala-339, Ser-342, Ser-343, Ser-345, and Ser-346 each contribute to the Na(+) site. Helical transmembrane passes span 378–398 (TLTV…IMSN), 406–426 (FNSL…LGIF), 435–455 (ALLG…ATDL), and 457–477 (FFFY…LTAP).

It belongs to the sodium:solute symporter (SSF) (TC 2.A.21) family.

The protein localises to the cell inner membrane. The catalysed reaction is N-acetyl-alpha-neuraminate(out) + 2 Na(+)(out) = N-acetyl-alpha-neuraminate(in) + 2 Na(+)(in). In terms of biological role, symporter that uses the Na(+) gradient as the driving force for the uptake of the sialic acid N-acetylneuraminic acid (Neu5Ac). Might play a role in persistence after colonization. In Aliivibrio fischeri (strain ATCC 700601 / ES114) (Vibrio fischeri), this protein is Sodium/sialic acid symporter NanT.